The following is a 431-amino-acid chain: Zeaxanthin glucosyltransferase (431 aa).

It belongs to the UDP-glycosyltransferase family.

The enzyme catalyses all-trans-zeaxanthin + 2 UDP-alpha-D-glucose = zeaxanthin bis(beta-D-glucoside) + 2 UDP + 2 H(+). It functions in the pathway carotenoid biosynthesis; zeaxanthin diglucoside biosynthesis. In terms of biological role, catalyzes the glycosylation reaction which converts zeaxanthin to zeaxanthin bis(beta-D-glucoside). The reaction proceeds in two steps with the monoglucoside as an intermediate. This Pantoea ananas (Erwinia uredovora) protein is Zeaxanthin glucosyltransferase (crtX).